The sequence spans 314 residues: tRNA pseudouridine synthase B (314 aa).

Histidine 43 serves as a coordination point for substrate. Aspartate 48 acts as the Nucleophile in catalysis. Residues tyrosine 76, tyrosine 179, and leucine 200 each coordinate substrate.

This sequence belongs to the pseudouridine synthase TruB family. Type 1 subfamily.

The enzyme catalyses uridine(55) in tRNA = pseudouridine(55) in tRNA. In terms of biological role, responsible for synthesis of pseudouridine from uracil-55 in the psi GC loop of transfer RNAs. The chain is tRNA pseudouridine synthase B from Shigella dysenteriae serotype 1 (strain Sd197).